The following is a 926-amino-acid chain: Probable zinc protease PqqL (926 aa).

H79 is a Zn(2+) binding site. E82 acts as the Proton acceptor in catalysis. Zn(2+) contacts are provided by H83 and E159.

It belongs to the peptidase M16 family. The cofactor is Zn(2+).

The sequence is that of Probable zinc protease PqqL (pqqL) from Haemophilus influenzae (strain ATCC 51907 / DSM 11121 / KW20 / Rd).